A 461-amino-acid polypeptide reads, in one-letter code: Trigger factor (461 aa).

The region spanning 166–245 is the PPIase FKBP-type domain; the sequence is GDFANIDLTA…VNSVKAEELP (80 aa).

This sequence belongs to the FKBP-type PPIase family. Tig subfamily.

Its subcellular location is the cytoplasm. The enzyme catalyses [protein]-peptidylproline (omega=180) = [protein]-peptidylproline (omega=0). Functionally, involved in protein export. Acts as a chaperone by maintaining the newly synthesized protein in an open conformation. Functions as a peptidyl-prolyl cis-trans isomerase. The protein is Trigger factor of Bifidobacterium animalis subsp. lactis (strain AD011).